The sequence spans 248 residues: Proteasome subunit alpha type-7 (248 aa).

O-linked (GlcNAc) serine glycosylation occurs at Ser-130. Residue Tyr-153 is modified to Phosphotyrosine. Lys-227 carries the N6-acetyllysine modification.

Belongs to the peptidase T1A family. As to quaternary structure, the 26S proteasome consists of a 20S proteasome core and two 19S regulatory subunits. The 20S proteasome core is a barrel-shaped complex made of 28 subunits that are arranged in four stacked rings. The two outer rings are each formed by seven alpha subunits, and the two inner rings are formed by seven beta subunits. The proteolytic activity is exerted by three beta-subunits PSMB5, PSMB6 and PSMB7. PSMA7 interacts directly with the PSMG1-PSMG2 heterodimer which promotes 20S proteasome assembly. Interacts with HIF1A. Interacts with RAB7A. Interacts with PRKN. Interacts with ABL1 and ABL2. Interacts with EMAP2. Interacts with MAVS.

It is found in the cytoplasm. The protein localises to the nucleus. Component of the 20S core proteasome complex involved in the proteolytic degradation of most intracellular proteins. This complex plays numerous essential roles within the cell by associating with different regulatory particles. Associated with two 19S regulatory particles, forms the 26S proteasome and thus participates in the ATP-dependent degradation of ubiquitinated proteins. The 26S proteasome plays a key role in the maintenance of protein homeostasis by removing misfolded or damaged proteins that could impair cellular functions, and by removing proteins whose functions are no longer required. Associated with the PA200 or PA28, the 20S proteasome mediates ubiquitin-independent protein degradation. This type of proteolysis is required in several pathways including spermatogenesis (20S-PA200 complex) or generation of a subset of MHC class I-presented antigenic peptides (20S-PA28 complex). Inhibits the transactivation function of HIF-1A under both normoxic and hypoxia-mimicking conditions. The interaction with EMAP2 increases the proteasome-mediated HIF-1A degradation under the hypoxic conditions. Plays a role in hepatitis C virus internal ribosome entry site-mediated translation. Mediates nuclear translocation of the androgen receptor (AR) and thereby enhances androgen-mediated transactivation. Promotes MAVS degradation and thereby negatively regulates MAVS-mediated innate immune response. In Bos taurus (Bovine), this protein is Proteasome subunit alpha type-7 (PSMA7).